Here is a 398-residue protein sequence, read N- to C-terminus: Acetate kinase (398 aa).

Mg(2+) is bound at residue asparagine 7. Lysine 14 lines the ATP pocket. Residue arginine 91 coordinates substrate. Residue aspartate 148 is the Proton donor/acceptor of the active site. ATP contacts are provided by residues 208–212, 283–285, and 331–335; these read HIGNG, DMR, and GVGEN. Position 384 (glutamate 384) interacts with Mg(2+).

This sequence belongs to the acetokinase family. As to quaternary structure, homodimer. Mg(2+) is required as a cofactor. It depends on Mn(2+) as a cofactor.

It localises to the cytoplasm. It carries out the reaction acetate + ATP = acetyl phosphate + ADP. The protein operates within metabolic intermediate biosynthesis; acetyl-CoA biosynthesis; acetyl-CoA from acetate: step 1/2. Catalyzes the formation of acetyl phosphate from acetate and ATP. Can also catalyze the reverse reaction. This chain is Acetate kinase, found in Bacteroides fragilis (strain ATCC 25285 / DSM 2151 / CCUG 4856 / JCM 11019 / LMG 10263 / NCTC 9343 / Onslow / VPI 2553 / EN-2).